The primary structure comprises 327 residues: Ribose-phosphate pyrophosphokinase (327 aa).

51-53 (DGE) lines the ATP pocket. The Mg(2+) site is built by histidine 144 and aspartate 183. Lysine 207 is an active-site residue. D-ribose 5-phosphate contacts are provided by residues arginine 209, aspartate 233, and 237–241 (DTGGT).

Belongs to the ribose-phosphate pyrophosphokinase family. Class I subfamily. Homohexamer. The cofactor is Mg(2+).

Its subcellular location is the cytoplasm. It catalyses the reaction D-ribose 5-phosphate + ATP = 5-phospho-alpha-D-ribose 1-diphosphate + AMP + H(+). It participates in metabolic intermediate biosynthesis; 5-phospho-alpha-D-ribose 1-diphosphate biosynthesis; 5-phospho-alpha-D-ribose 1-diphosphate from D-ribose 5-phosphate (route I): step 1/1. Its function is as follows. Involved in the biosynthesis of the central metabolite phospho-alpha-D-ribosyl-1-pyrophosphate (PRPP) via the transfer of pyrophosphoryl group from ATP to 1-hydroxyl of ribose-5-phosphate (Rib-5-P). The protein is Ribose-phosphate pyrophosphokinase of Prochlorococcus marinus (strain SARG / CCMP1375 / SS120).